The chain runs to 158 residues: 3-dehydroquinate dehydratase (158 aa).

The Proton acceptor role is filled by Tyr24. Positions 75, 81, and 88 each coordinate substrate. The Proton donor role is filled by His101. Substrate-binding positions include 102-103 and Arg112; that span reads LS.

The protein belongs to the type-II 3-dehydroquinase family. As to quaternary structure, homododecamer.

The enzyme catalyses 3-dehydroquinate = 3-dehydroshikimate + H2O. Its pathway is metabolic intermediate biosynthesis; chorismate biosynthesis; chorismate from D-erythrose 4-phosphate and phosphoenolpyruvate: step 3/7. Functionally, catalyzes a trans-dehydration via an enolate intermediate. The polypeptide is 3-dehydroquinate dehydratase (Bartonella bacilliformis (strain ATCC 35685 / KC583 / Herrer 020/F12,63)).